We begin with the raw amino-acid sequence, 673 residues long: B3 domain-containing protein Os01g0905400 (673 aa).

A compositionally biased stretch (basic and acidic residues) spans 1–34 (MVELIKVPKIEQEEGNADSHGKEKADVVHEEKTE). The disordered stretch occupies residues 1–44 (MVELIKVPKIEQEEGNADSHGKEKADVVHEEKTEKVKRRRKRVS). Residues 79–172 (LPSFFKIMVG…VFTVQIFAIS (94 aa)) constitute a DNA-binding region (TF-B3 1). Positions 315–337 (PSFSYPESSNVMTADKESERSHQ) are disordered. Basic and acidic residues predominate over residues 328 to 337 (ADKESERSHQ). A DNA-binding region (TF-B3 2) is located at residues 576–671 (SKKFCITIPP…ELSFQVLVPN (96 aa)).

The protein localises to the nucleus. The protein is B3 domain-containing protein Os01g0905400 of Oryza sativa subsp. japonica (Rice).